The primary structure comprises 511 residues: Histidine ammonia-lyase (511 aa).

The segment at residues 143–145 is a cross-link (5-imidazolinone (Ala-Gly)); that stretch reads ASG. The residue at position 144 (Ser-144) is a 2,3-didehydroalanine (Ser).

Belongs to the PAL/histidase family. In terms of processing, contains an active site 4-methylidene-imidazol-5-one (MIO), which is formed autocatalytically by cyclization and dehydration of residues Ala-Ser-Gly.

The protein resides in the cytoplasm. The catalysed reaction is L-histidine = trans-urocanate + NH4(+). It functions in the pathway amino-acid degradation; L-histidine degradation into L-glutamate; N-formimidoyl-L-glutamate from L-histidine: step 1/3. This chain is Histidine ammonia-lyase, found in Vibrio cholerae serotype O1 (strain ATCC 39315 / El Tor Inaba N16961).